The sequence spans 312 residues: 4-diphosphocytidyl-2-C-methyl-D-erythritol kinase (312 aa).

Lys-18 is an active-site residue. Position 104–114 (104–114 (PIAGGMGGGSA)) interacts with ATP. Asp-146 is a catalytic residue.

This sequence belongs to the GHMP kinase family. IspE subfamily.

The catalysed reaction is 4-CDP-2-C-methyl-D-erythritol + ATP = 4-CDP-2-C-methyl-D-erythritol 2-phosphate + ADP + H(+). The protein operates within isoprenoid biosynthesis; isopentenyl diphosphate biosynthesis via DXP pathway; isopentenyl diphosphate from 1-deoxy-D-xylulose 5-phosphate: step 3/6. Its function is as follows. Catalyzes the phosphorylation of the position 2 hydroxy group of 4-diphosphocytidyl-2C-methyl-D-erythritol. The chain is 4-diphosphocytidyl-2-C-methyl-D-erythritol kinase from Clavibacter michiganensis subsp. michiganensis (strain NCPPB 382).